The primary structure comprises 102 residues: Small ribosomal subunit protein uS10 (102 aa).

It belongs to the universal ribosomal protein uS10 family. As to quaternary structure, part of the 30S ribosomal subunit.

Involved in the binding of tRNA to the ribosomes. This is Small ribosomal subunit protein uS10 from Bacillus thuringiensis (strain Al Hakam).